We begin with the raw amino-acid sequence, 181 residues long: Extracellular superoxide dismutase [Cu-Zn] (181 aa).

The signal sequence occupies residues 1–18 (MMQYLVVSLALCATICSA). N-linked (GlcNAc...) asparagine glycosylation is present at asparagine 46. Cu cation is bound by residues histidine 75, histidine 77, and histidine 92. Cysteines 86 and 175 form a disulfide. Residues histidine 92, histidine 100, histidine 109, and aspartate 112 each contribute to the Zn(2+) site. The N-linked (GlcNAc...) asparagine glycan is linked to asparagine 119. Histidine 149 serves as a coordination point for Cu cation. Asparagine 159 carries N-linked (GlcNAc...) asparagine glycosylation.

The protein belongs to the Cu-Zn superoxide dismutase family. Requires Cu cation as cofactor. Zn(2+) is required as a cofactor. In terms of tissue distribution, expressed at higher levels in females compared to males.

Its subcellular location is the secreted. The enzyme catalyses 2 superoxide + 2 H(+) = H2O2 + O2. Protects the extracellular space from the toxic effects of reactive oxygen intermediates by converting superoxide radicals into hydrogen peroxide and oxygen. This is Extracellular superoxide dismutase [Cu-Zn] from Drosophila melanogaster (Fruit fly).